Here is a 406-residue protein sequence, read N- to C-terminus: Dual-specificity RNA methyltransferase RlmN (406 aa).

The active-site Proton acceptor is Glu-119. Residues 125-370 (DKGRGTLCVS…AMVRRTRGDD (246 aa)) form the Radical SAM core domain. Residues Cys-132 and Cys-375 are joined by a disulfide bond. The [4Fe-4S] cluster site is built by Cys-139, Cys-143, and Cys-146. S-adenosyl-L-methionine-binding positions include 192 to 193 (GE), Ser-224, 246 to 248 (SLH), and Asn-332. The S-methylcysteine intermediate role is filled by Cys-375.

The protein belongs to the radical SAM superfamily. RlmN family. It depends on [4Fe-4S] cluster as a cofactor.

The protein localises to the cytoplasm. It catalyses the reaction adenosine(2503) in 23S rRNA + 2 reduced [2Fe-2S]-[ferredoxin] + 2 S-adenosyl-L-methionine = 2-methyladenosine(2503) in 23S rRNA + 5'-deoxyadenosine + L-methionine + 2 oxidized [2Fe-2S]-[ferredoxin] + S-adenosyl-L-homocysteine. The catalysed reaction is adenosine(37) in tRNA + 2 reduced [2Fe-2S]-[ferredoxin] + 2 S-adenosyl-L-methionine = 2-methyladenosine(37) in tRNA + 5'-deoxyadenosine + L-methionine + 2 oxidized [2Fe-2S]-[ferredoxin] + S-adenosyl-L-homocysteine. Functionally, specifically methylates position 2 of adenine 2503 in 23S rRNA and position 2 of adenine 37 in tRNAs. m2A2503 modification seems to play a crucial role in the proofreading step occurring at the peptidyl transferase center and thus would serve to optimize ribosomal fidelity. This Xylella fastidiosa (strain 9a5c) protein is Dual-specificity RNA methyltransferase RlmN.